A 547-amino-acid polypeptide reads, in one-letter code: Chaperonin GroEL 1 (547 aa).

ATP is bound by residues T30 to P33, K51, D87 to T91, G415, and D496.

Belongs to the chaperonin (HSP60) family. In terms of assembly, forms a cylinder of 14 subunits composed of two heptameric rings stacked back-to-back. Interacts with the co-chaperonin GroES.

Its subcellular location is the cytoplasm. It catalyses the reaction ATP + H2O + a folded polypeptide = ADP + phosphate + an unfolded polypeptide.. In terms of biological role, together with its co-chaperonin GroES, plays an essential role in assisting protein folding. The GroEL-GroES system forms a nano-cage that allows encapsulation of the non-native substrate proteins and provides a physical environment optimized to promote and accelerate protein folding. The chain is Chaperonin GroEL 1 from Rhodopseudomonas palustris (strain ATCC BAA-98 / CGA009).